Consider the following 477-residue polypeptide: Mannitol 2-dehydrogenase (477 aa).

Position 19-30 (19-30 (IVHIGVGNFHRA)) interacts with NAD(+).

Belongs to the mannitol dehydrogenase family. In terms of assembly, monomer.

It carries out the reaction D-mannitol + NAD(+) = D-fructose + NADH + H(+). The polypeptide is Mannitol 2-dehydrogenase (mtlK) (Cereibacter sphaeroides (Rhodobacter sphaeroides)).